Reading from the N-terminus, the 693-residue chain is MWPQPYLPPHPMMLEESRQNKLAAAKKKLKEYQQRKSPGIPAGAKTKKKKTDSSPETTTSGGGHSPGDSQYQELAVALESSSVTINQLNENIESLKQQKKQVEHQLEEAKKTNNEIHKAQMEQLETINILTLEKADLKTTLYHTKRAARHFEEESKDLAGRLQYSLQRIQELERALSAVSTQQQEEDRSSSCREAVLQRRLQQTIKERALLNAHVTQVTESLKQVQLERDEYAKHIKGERARWQERMWKMSVEARTLKEEKKRDIHRIQELERSLSELKNQMAEPPSLAPPAVTSVVEQLQDEAKHLRQEVEGLEGKLQSQVENNQALSLLSKEQKQRLQEQEEMLREQEAQRVREQERLCEQNERLREQQKTLQEQGERLRKQEQRLRKQEERLRKEEERLQKQEKRLWDQEERLWKKEERLQKQEERLALSQNHKLDKQLAEPQCSFEDLNNEKKSALQLEQQVKELQEKLDEEHLEAASQRNQQLETQLSLVALPGEGDGGQHLDSEEEEAPRPTPNIPEDLESREATSSFMDLPKEKADGTEQVERRELGFVQPSGVTDGMRESFTVYESQGAVPNTRHQEMEDVIRLAQKEEEMKVKLLELQELVLPLVGNHEGHGKFLIAAQNPADEPTPGAPAPQELGAAGEQDDFYEVSLDNNVEPAPGAAREGSPHDNPPVQQIVQLSPVMQDT.

Disordered regions lie at residues 20 to 71 (NKLA…DSQY), 497 to 547 (LPGE…GTEQ), and 629 to 693 (NPAD…MQDT). A coiled-coil region spans residues 73–611 (ELAVALESSS…KLLELQELVL (539 aa)). The span at 537–547 (LPKEKADGTEQ) shows a compositional bias: basic and acidic residues. Residues 679 to 693 (PVQQIVQLSPVMQDT) show a composition bias toward polar residues.

The protein belongs to the GOLGA6 family.

This Homo sapiens (Human) protein is Golgin subfamily A member 6C (GOLGA6C).